The sequence spans 822 residues: DNA gyrase subunit A (822 aa).

The region spanning 32–497 (LPDVRDGLKP…QVLSLEDEDL (466 aa)) is the Topo IIA-type catalytic domain. The O-(5'-phospho-DNA)-tyrosine intermediate role is filled by Tyr-120. Positions 524 to 530 (QKRGGRG) match the GyrA-box motif.

Belongs to the type II topoisomerase GyrA/ParC subunit family. In terms of assembly, heterotetramer, composed of two GyrA and two GyrB chains. In the heterotetramer, GyrA contains the active site tyrosine that forms a transient covalent intermediate with DNA, while GyrB binds cofactors and catalyzes ATP hydrolysis.

It localises to the cytoplasm. It carries out the reaction ATP-dependent breakage, passage and rejoining of double-stranded DNA.. A type II topoisomerase that negatively supercoils closed circular double-stranded (ds) DNA in an ATP-dependent manner to modulate DNA topology and maintain chromosomes in an underwound state. Negative supercoiling favors strand separation, and DNA replication, transcription, recombination and repair, all of which involve strand separation. Also able to catalyze the interconversion of other topological isomers of dsDNA rings, including catenanes and knotted rings. Type II topoisomerases break and join 2 DNA strands simultaneously in an ATP-dependent manner. The chain is DNA gyrase subunit A from Streptococcus pneumoniae (strain ATCC BAA-255 / R6).